We begin with the raw amino-acid sequence, 261 residues long: uncharacterized protein (261 aa).

Residues 1 to 22 (MGYLKKVGMCISLLIVIIFVTS) form the signal peptide. Cysteine 23 carries the N-palmitoyl cysteine lipid modification. The S-diacylglycerol cysteine moiety is linked to residue cysteine 23.

The protein belongs to the staphylococcal tandem lipoprotein family.

The protein resides in the cell membrane. This is an uncharacterized protein from Staphylococcus aureus (strain bovine RF122 / ET3-1).